Reading from the N-terminus, the 306-residue chain is Ribosomal RNA small subunit methyltransferase H (306 aa).

Residues 33–35 (GGY), Asp-51, Phe-82, Asp-96, and Gln-103 each bind S-adenosyl-L-methionine.

It belongs to the methyltransferase superfamily. RsmH family.

It localises to the cytoplasm. It carries out the reaction cytidine(1402) in 16S rRNA + S-adenosyl-L-methionine = N(4)-methylcytidine(1402) in 16S rRNA + S-adenosyl-L-homocysteine + H(+). Its function is as follows. Specifically methylates the N4 position of cytidine in position 1402 (C1402) of 16S rRNA. This chain is Ribosomal RNA small subunit methyltransferase H, found in Rickettsia akari (strain Hartford).